The following is a 381-amino-acid chain: Prokineticin receptor 2 (381 aa).

Topologically, residues 1 to 51 (MGPQNRNTSFAPDLNPPQDHVSLNYSYGDYDLPLGEDEDVTKTQTFFAAKI) are extracellular. N-linked (GlcNAc...) asparagine glycans are attached at residues N7 and N24. Residues 52-72 (VIGVALAGIMLVCGIGNFVFI) form a helical membrane-spanning segment. Residues 73-86 (AALARYKKLRNLTN) lie on the Cytoplasmic side of the membrane. The chain crosses the membrane as a helical span at residues 87–107 (LLIANLAISDFLVAIVCCPFE). The Extracellular segment spans residues 108 to 133 (MDYYVVRQLSWAHGHVLCASVNYLRT). A disulfide bond links C125 and C205. Residues 134-154 (VSLYVSTNALLAIAIDRYLAI) form a helical membrane-spanning segment. At 155–168 (VHPLKPRMNYQTAS) the chain is on the cytoplasmic side. Residues 169–189 (FLIALVWMVSILIAVPSAYFT) form a helical membrane-spanning segment. Residues 190–220 (TETILVIVKNQEKIFCGQIWSVDQQLYYKSY) are Extracellular-facing. Residues 221 to 241 (FLFVFGLEFVGPVVTMTLCYA) traverse the membrane as a helical segment. At 242-270 (RISQELWFKAVPGFQTEQIRKRLRCRRKT) the chain is on the cytoplasmic side. The helical transmembrane segment at 271–291 (VLLLMGILTAYVLCWAPFYGF) threads the bilayer. Over 292–310 (TIVRDFFPTVVVKEKHYLT) the chain is Extracellular. Residues 311-331 (AFYVVECIAMSNSMINTICFV) traverse the membrane as a helical segment. The Cytoplasmic portion of the chain corresponds to 332–381 (TVKNNTMKYFKKMLRLHWRPSHYGSKSSADLDLKTSGVPATEEVDCIRLK).

It belongs to the G-protein coupled receptor 1 family. Homodimer. In terms of tissue distribution, expressed in several regions of the brain, including paraventricular hypothalamic nucleus, dorsal medial hypothalamic nucleus, paratenial thalamic nuclei, paracentral thalamic nucleus, lateral habenular nucleus, lateral septal nucleus, lateral globus pallidus and amygdala. Highest expression seen in paraventricular thalamic nuclei and is also extensively expressed in the suprachiasmatic nucleus.

It localises to the cell membrane. Receptor for prokineticin 2. Exclusively coupled to the G(q) subclass of heteromeric G proteins. Activation leads to mobilization of calcium, stimulation of phosphoinositide turnover and activation of p44/p42 mitogen-activated protein kinase. The sequence is that of Prokineticin receptor 2 (Prokr2) from Mus musculus (Mouse).